Reading from the N-terminus, the 351-residue chain is Type II restriction enzyme NmeDI (351 aa).

The enzyme catalyses Endonucleolytic cleavage of DNA to give specific double-stranded fragments with terminal 5'-phosphates.. A P subtype restriction enzyme that recognizes the double-stranded sequence 5'-N(12)RCCGGYN(12)-3' and cleaves on both sides of the recognition sequence. This is Type II restriction enzyme NmeDI (nmeDIRP) from Neisseria meningitidis serogroup C.